We begin with the raw amino-acid sequence, 200 residues long: MDLVLKRAFDIFSSLSALLVLAPFLLFVALLIKLDSPGPVLFKQTRWGKNCKAIKVYKFRSMRTDLCDVSGVAQTVKNDPRITRIGAILRRTNVDELPQLLNVLLGHMSVVGPRCHAIGMRAGGMLYEELVPEYHQRHAMRPGMTGLAQMRGLRGPTDRPAKARARIASDLYYVGNFSIVMDMRIIFGTVVSELTRGKGF.

Belongs to the bacterial sugar transferase family.

This is Exopolysaccharide production protein PSS (pss) from Rhizobium leguminosarum bv. phaseoli.